An 86-amino-acid chain; its full sequence is Large ribosomal subunit protein eL30 (86 aa).

It belongs to the eukaryotic ribosomal protein eL30 family.

This is Large ribosomal subunit protein eL30 (rpl30e) from Archaeoglobus fulgidus (strain ATCC 49558 / DSM 4304 / JCM 9628 / NBRC 100126 / VC-16).